The chain runs to 152 residues: 3-dehydroquinate dehydratase (152 aa).

Y26 functions as the Proton acceptor in the catalytic mechanism. Positions 77, 83, and 90 each coordinate substrate. H103 (proton donor) is an active-site residue. Residues 104-105 (LS) and R114 contribute to the substrate site.

The protein belongs to the type-II 3-dehydroquinase family. As to quaternary structure, homododecamer.

It carries out the reaction 3-dehydroquinate = 3-dehydroshikimate + H2O. Its pathway is metabolic intermediate biosynthesis; chorismate biosynthesis; chorismate from D-erythrose 4-phosphate and phosphoenolpyruvate: step 3/7. Catalyzes a trans-dehydration via an enolate intermediate. The polypeptide is 3-dehydroquinate dehydratase (aroQ) (Synechocystis sp. (strain ATCC 27184 / PCC 6803 / Kazusa)).